The sequence spans 67 residues: Sec-independent protein translocase protein TatA (67 aa).

Residues 1-21 (MFGIGIQELLVVLVLVLLVFG) traverse the membrane as a helical segment. Residues 46 to 67 (PDEIDITPGKKNGKTDKDDKQA) are disordered. Positions 58–67 (GKTDKDDKQA) are enriched in basic and acidic residues.

It belongs to the TatA/E family. In terms of assembly, the Tat system comprises two distinct complexes: a TatABC complex, containing multiple copies of TatA, TatB and TatC subunits, and a separate TatA complex, containing only TatA subunits. Substrates initially bind to the TatABC complex, which probably triggers association of the separate TatA complex to form the active translocon.

Its subcellular location is the cell inner membrane. In terms of biological role, part of the twin-arginine translocation (Tat) system that transports large folded proteins containing a characteristic twin-arginine motif in their signal peptide across membranes. TatA could form the protein-conducting channel of the Tat system. This chain is Sec-independent protein translocase protein TatA, found in Nitratidesulfovibrio vulgaris (strain DSM 19637 / Miyazaki F) (Desulfovibrio vulgaris).